The chain runs to 202 residues: MSRYTGPSWKISRRLGMSLSGTGKELARRPYAPGDHGQGRRGKLSEYGTQLREKQKLRMMYGLTERQFANLFIKAGKIREGKHGVNFMILLERRLDNMVYRLGLATTRRQARQLVNHGHITVDGKRVDIPSYEVSVGQVVSVREKSKKLAVITGAVEAVVARPNFVQFDADKLEGSLTRLPEREELEADIDESLIVEYYNKL.

The interval 22 to 48 (TGKELARRPYAPGDHGQGRRGKLSEYG) is disordered. The S4 RNA-binding domain occupies 93–154 (RRLDNMVYRL…KSKKLAVITG (62 aa)).

The protein belongs to the universal ribosomal protein uS4 family. As to quaternary structure, part of the 30S ribosomal subunit. Contacts protein S5. The interaction surface between S4 and S5 is involved in control of translational fidelity.

In terms of biological role, one of the primary rRNA binding proteins, it binds directly to 16S rRNA where it nucleates assembly of the body of the 30S subunit. Its function is as follows. With S5 and S12 plays an important role in translational accuracy. This chain is Small ribosomal subunit protein uS4, found in Lactiplantibacillus plantarum (strain ATCC BAA-793 / NCIMB 8826 / WCFS1) (Lactobacillus plantarum).